The primary structure comprises 215 residues: Urease accessory protein UreG (215 aa).

A GTP-binding site is contributed by 24–31 (GPVGSGKT).

It belongs to the SIMIBI class G3E GTPase family. UreG subfamily. In terms of assembly, homodimer. UreD, UreF and UreG form a complex that acts as a GTP-hydrolysis-dependent molecular chaperone, activating the urease apoprotein by helping to assemble the nickel containing metallocenter of UreC. The UreE protein probably delivers the nickel.

The protein localises to the cytoplasm. Facilitates the functional incorporation of the urease nickel metallocenter. This process requires GTP hydrolysis, probably effectuated by UreG. In Burkholderia ambifaria (strain ATCC BAA-244 / DSM 16087 / CCUG 44356 / LMG 19182 / AMMD) (Burkholderia cepacia (strain AMMD)), this protein is Urease accessory protein UreG.